Consider the following 62-residue polypeptide: Ferredoxin-3 (62 aa).

2 consecutive 4Fe-4S ferredoxin-type domains span residues 2–28 (SLKITEECTFCAACEPECPVNAISAGS) and 29–62 (DIYVIDESACTECEGYADSPACVAVCPAECIVKA). Residues Cys9, Cys12, Cys15, Cys19, Cys38, Cys41, Cys50, and Cys54 each coordinate [4Fe-4S] cluster.

It depends on [4Fe-4S] cluster as a cofactor.

Its function is as follows. Ferredoxins are iron-sulfur proteins that transfer electrons in a wide variety of metabolic reactions. The protein is Ferredoxin-3 of Chlorobaculum tepidum (strain ATCC 49652 / DSM 12025 / NBRC 103806 / TLS) (Chlorobium tepidum).